Consider the following 207-residue polypeptide: Large ribosomal subunit protein uL4 (207 aa).

Positions 52 to 77 (RGWADVSGGGRKPWRQKGTGRARAGS) are disordered.

This sequence belongs to the universal ribosomal protein uL4 family. Part of the 50S ribosomal subunit.

Its function is as follows. One of the primary rRNA binding proteins, this protein initially binds near the 5'-end of the 23S rRNA. It is important during the early stages of 50S assembly. It makes multiple contacts with different domains of the 23S rRNA in the assembled 50S subunit and ribosome. Functionally, forms part of the polypeptide exit tunnel. The sequence is that of Large ribosomal subunit protein uL4 from Moorella thermoacetica (strain ATCC 39073 / JCM 9320).